The chain runs to 383 residues: Cytochrome b (383 aa).

Transmembrane regions (helical) follow at residues 35-55 (FGSI…ILSM), 79-100 (WLFR…YIHI), 115-135 (WGIG…GYVL), and 180-200 (FFSL…LHLF). H85 and H99 together coordinate heme b. Residues H184 and H198 each contribute to the heme b site. H203 serves as a coordination point for a ubiquinone. Helical transmembrane passes span 228-248 (IKDL…NFQF), 290-310 (LGGV…IFYN), 321-341 (LNKI…WLGK), and 348-368 (FTNI…LNFY).

Belongs to the cytochrome b family. In terms of assembly, the main subunits of complex b-c1 are: cytochrome b, cytochrome c1 and the Rieske protein. It depends on heme b as a cofactor.

Its subcellular location is the mitochondrion inner membrane. Its function is as follows. Component of the ubiquinol-cytochrome c reductase complex (complex III or cytochrome b-c1 complex) that is part of the mitochondrial respiratory chain. The b-c1 complex mediates electron transfer from ubiquinol to cytochrome c. Contributes to the generation of a proton gradient across the mitochondrial membrane that is then used for ATP synthesis. The sequence is that of Cytochrome b (MT-CYB) from Apis mellifera ligustica (Common honeybee).